The chain runs to 277 residues: ATP synthase subunit a (277 aa).

5 helical membrane-spanning segments follow: residues 40–60 (AWHV…LIIF), 98–118 (SALI…MNLM), 154–174 (DLNL…FYSI), 219–239 (LFGN…IGYF), and 245–265 (FMWA…FMML).

This sequence belongs to the ATPase A chain family. F-type ATPases have 2 components, CF(1) - the catalytic core - and CF(0) - the membrane proton channel. CF(1) has five subunits: alpha(3), beta(3), gamma(1), delta(1), epsilon(1). CF(0) has three main subunits: a(1), b(2) and c(9-12). The alpha and beta chains form an alternating ring which encloses part of the gamma chain. CF(1) is attached to CF(0) by a central stalk formed by the gamma and epsilon chains, while a peripheral stalk is formed by the delta and b chains.

It localises to the cell inner membrane. Key component of the proton channel; it plays a direct role in the translocation of protons across the membrane. This Alteromonas mediterranea (strain DSM 17117 / CIP 110805 / LMG 28347 / Deep ecotype) protein is ATP synthase subunit a.